A 1288-amino-acid chain; its full sequence is Vacuolating cytotoxin autotransporter (1288 aa).

Positions 1–33 (MEIQQTHRKINRPLVSLVLAGALISAIPQESHA) are cleaved as a signal peptide. The disordered stretch occupies residues 326–377 (PPEGGYKDKPNSTTSQSGTKNDKKEISQNNNSNTEVINPPNNTQKTETEPTQ). Over residues 352–376 (SQNNNSNTEVINPPNNTQKTETEPT) the composition is skewed to polar residues. One can recognise an Autotransporter domain in the interval 1015–1288 (KYEKPTNVWA…ASNLGMRYSF (274 aa)).

The protein localises to the periplasm. The protein resides in the secreted. Its subcellular location is the cell surface. It is found in the cell outer membrane. Induces vacuolation of eukaryotic cells. Causes ulceration and gastric lesions. In Helicobacter pylori (strain J99 / ATCC 700824) (Campylobacter pylori J99), this protein is Vacuolating cytotoxin autotransporter (vacA).